We begin with the raw amino-acid sequence, 158 residues long: Small ribosomal subunit protein uS7 (158 aa).

This sequence belongs to the universal ribosomal protein uS7 family. As to quaternary structure, part of the 30S ribosomal subunit. Contacts proteins S9 and S11.

One of the primary rRNA binding proteins, it binds directly to 16S rRNA where it nucleates assembly of the head domain of the 30S subunit. Is located at the subunit interface close to the decoding center, probably blocks exit of the E-site tRNA. The chain is Small ribosomal subunit protein uS7 from Flavobacterium psychrophilum (strain ATCC 49511 / DSM 21280 / CIP 103535 / JIP02/86).